Here is a 446-residue protein sequence, read N- to C-terminus: Histidine--tRNA ligase (446 aa).

It belongs to the class-II aminoacyl-tRNA synthetase family. In terms of assembly, homodimer.

It is found in the cytoplasm. The enzyme catalyses tRNA(His) + L-histidine + ATP = L-histidyl-tRNA(His) + AMP + diphosphate + H(+). The polypeptide is Histidine--tRNA ligase (Burkholderia cenocepacia (strain HI2424)).